We begin with the raw amino-acid sequence, 37 residues long: Omega/M-ectatotoxin-Et1a subunit A (37 aa).

A disulfide bridge links cysteine 12 with cysteine 34.

The protein belongs to the ectatomin family. Ectatomin-Et subfamily. As to quaternary structure, heterodimer of an A and a B chain; disulfide-linked. In terms of tissue distribution, expressed by the venom gland.

The protein localises to the secreted. It localises to the target cell membrane. In terms of biological role, algogenic for animals, human and insects. At high concentrations (0.5-1 uM), it acts as a pore-forming protein that forms nonselective cation channels both in cell and artificial membranes. It is weakly selective for cation over anions channel conductance is identical in both directions. At lower concentrations (1-10 nM), this heterodimer inhibits cardiac L-type calcium currents in isolated rat cardiac ventricular myocytes. The polypeptide is Omega/M-ectatotoxin-Et1a subunit A (Ectatomma tuberculatum (Selva ant)).